The following is a 34-amino-acid chain: PRRRRRSSRPVRRRRRYRRSTVARRRRRVVRRRR.

The disordered stretch occupies residues 1–34 (PRRRRRSSRPVRRRRRYRRSTVARRRRRVVRRRR).

In terms of tissue distribution, testis.

The protein resides in the nucleus. Its subcellular location is the chromosome. In terms of biological role, protamines substitute for histones in the chromatin of sperm during the haploid phase of spermatogenesis. They compact sperm DNA into a highly condensed, stable and inactive complex. This chain is Protamine-Z1/Z2, found in Thunnus thynnus (Atlantic bluefin tuna).